Reading from the N-terminus, the 653-residue chain is Modification methylase StsI (653 aa).

The protein belongs to the N(4)/N(6)-methyltransferase family. As to quaternary structure, monomer.

The catalysed reaction is a 2'-deoxyadenosine in DNA + S-adenosyl-L-methionine = an N(6)-methyl-2'-deoxyadenosine in DNA + S-adenosyl-L-homocysteine + H(+). In terms of biological role, an alpha subtype methylase that recognizes the double-stranded sequence 5'-GGATG-3' in one strand and 3'-CATCC-5' in the other, methylates A of both strands, and protects the DNA from cleavage by the StsI endonuclease. The 2 domains of the protein participate in modification of the two strands. The chain is Modification methylase StsI (stsIM) from Streptococcus sanguinis.